The following is a 148-amino-acid chain: Large ribosomal subunit protein bL9 (148 aa).

This sequence belongs to the bacterial ribosomal protein bL9 family.

In terms of biological role, binds to the 23S rRNA. The sequence is that of Large ribosomal subunit protein bL9 from Stutzerimonas stutzeri (strain A1501) (Pseudomonas stutzeri).